The primary structure comprises 304 residues: MNNENMVRVFYVLLMGLGFPIMRFMSIHFETLNNNSVRFLSGGSLFVIICLIKFRSELKKIIGEPKIILYLFIYLFILGIFMTGNMFFFINGLKYTSALAGSIFGILAMPLAIIIAGIFFKDERDRIRQKEFYIGELLAIIGSLIFVINSSNNDGNTDFFLGAIFLFTAIFIQSVQNLIVKKVAKKINAVVISASTATISGVLFLCLAFNTKQIYLLQDVGIGMLIGLVCAGFYGMLTGMLMAFYIVQKQGITVFNILQLLIPLSTAIIGYLTLDERINIYQGISGIIVIIGCVLALKRKNKEC.

9 consecutive transmembrane segments (helical) span residues 9 to 29 (VFYV…SIHF), 67 to 87 (IILY…GNMF), 100 to 120 (AGSI…GIFF), 131 to 151 (EFYI…INSS), 159 to 179 (FFLG…QNLI), 189 to 209 (AVVI…CLAF), 222 to 242 (IGML…GMLM), 252 to 272 (ITVF…IGYL), and 278 to 298 (INIY…LALK). EamA domains are found at residues 13 to 148 (LLMG…IFVI) and 171 to 298 (FIQS…LALK).

This sequence belongs to the EamA transporter family.

The protein localises to the cell membrane. This is an uncharacterized protein from Haemophilus influenzae (strain ATCC 51907 / DSM 11121 / KW20 / Rd).